A 410-amino-acid polypeptide reads, in one-letter code: MGCTVSRRRTTTAEASSAWGIFGFYRPRSPSPPPQRLSLPLTVMDCPICLDVAATEAQTLPCMHKFCLDCIQRWTLTSTACPLCNARVTSILHHVDSDASFVETPVEGATDVDGEEDEPVGGGFAVIWGEDYTEEVRHEEAEGQGSGSGSRARPRVPVFNWLYGQVSTVIESDPIREAVVDNIVEIIQEHGMNRQRVTEAMLPMFGANTHALVDTLFDISAQWMRRMQRRAPMSHQGVNYIDTSESEAHSDSEVSSPDEEDSGASSSGVHTEDLTEASESADDQRPAPRRSPRRARRAAVLRREQRRTRCLRRGRTGGQAQGETPEAPSSGEGSSAQHGASGAGAGPGSANTAASARSSPSSSPSSSMRRPSPSASAPETAAPRGGPPASSSSGSPRSATIFIDLTQDDD.

The RING-type zinc-finger motif lies at 46–85 (CPICLDVAATEAQTLPCMHKFCLDCIQRWTLTSTACPLCN). Positions 243–410 (TSESEAHSDS…IFIDLTQDDD (168 aa)) are disordered. The span at 287–315 (APRRSPRRARRAAVLRREQRRTRCLRRGR) shows a compositional bias: basic residues. Composition is skewed to low complexity over residues 329-340 (SSGEGSSAQHGA) and 348-399 (GSAN…PRSA).

In terms of processing, auto-ubiquitinated.

It catalyses the reaction S-ubiquitinyl-[E2 ubiquitin-conjugating enzyme]-L-cysteine + [acceptor protein]-L-lysine = [E2 ubiquitin-conjugating enzyme]-L-cysteine + N(6)-ubiquitinyl-[acceptor protein]-L-lysine.. Functionally, evades nuclear antiviral defenses triggered by dsDNA viruses. Acts during the initial stages of lytic infection and the reactivation of latent viral genome. Prevents the antiviral effect of nuclear bodies by degrading host PML and SP100. The sequence is that of E3 ubiquitin-protein ligase ICP0 (EP0) from Sus scrofa (Pig).